A 56-amino-acid polypeptide reads, in one-letter code: Small ribosomal subunit protein uS14 (56 aa).

Zn(2+)-binding residues include cysteine 21, cysteine 24, cysteine 39, and cysteine 42.

The protein belongs to the universal ribosomal protein uS14 family. Component of the 40S small ribosomal subunit. Zn(2+) is required as a cofactor.

The protein localises to the cytoplasm. Its subcellular location is the cytosol. It is found in the rough endoplasmic reticulum. The sequence is that of Small ribosomal subunit protein uS14 (RpS29) from Plutella xylostella (Diamondback moth).